The following is a 487-amino-acid chain: Probable Xaa-Pro aminopeptidase CPSG_02684 (487 aa).

Residues 1–10 show a composition bias toward polar residues; the sequence is MAGSNTLSSS. The segment at 1-22 is disordered; that stretch reads MAGSNTLSSSEHGDDPRGHSYS. Residues Asp-275, Asp-286, Glu-421, and Glu-460 each contribute to the Mn(2+) site.

This sequence belongs to the peptidase M24B family. Mn(2+) serves as cofactor.

The catalysed reaction is Release of any N-terminal amino acid, including proline, that is linked to proline, even from a dipeptide or tripeptide.. In terms of biological role, catalyzes the removal of a penultimate prolyl residue from the N-termini of peptides. This Coccidioides posadasii (strain RMSCC 757 / Silveira) (Valley fever fungus) protein is Probable Xaa-Pro aminopeptidase CPSG_02684.